A 35-amino-acid chain; its full sequence is Photosystem II reaction center protein M (35 aa).

Residues 5–25 (ILGLIATALFILIPTSFLIIL) form a helical membrane-spanning segment.

The protein belongs to the PsbM family. PSII is composed of 1 copy each of membrane proteins PsbA, PsbB, PsbC, PsbD, PsbE, PsbF, PsbH, PsbI, PsbJ, PsbK, PsbL, PsbM, PsbT, PsbX, PsbY, PsbZ, Psb30/Ycf12, at least 3 peripheral proteins of the oxygen-evolving complex and a large number of cofactors. It forms dimeric complexes.

It is found in the plastid. The protein localises to the chloroplast thylakoid membrane. Functionally, one of the components of the core complex of photosystem II (PSII). PSII is a light-driven water:plastoquinone oxidoreductase that uses light energy to abstract electrons from H(2)O, generating O(2) and a proton gradient subsequently used for ATP formation. It consists of a core antenna complex that captures photons, and an electron transfer chain that converts photonic excitation into a charge separation. This subunit is found at the monomer-monomer interface. The polypeptide is Photosystem II reaction center protein M (Oltmannsiellopsis viridis (Marine flagellate)).